A 198-amino-acid polypeptide reads, in one-letter code: Nucleoid occlusion factor SlmA (198 aa).

Residues 10 to 70 (NRREEILQSL…SLIEFIEDSL (61 aa)) form the HTH tetR-type domain. Positions 33-52 (TTAKLAASVGVSEAALYRHF) form a DNA-binding region, H-T-H motif. Residues 117–144 (EQDRLQGRINQLFERIEAQLRQVLREKR) adopt a coiled-coil conformation.

It belongs to the nucleoid occlusion factor SlmA family. As to quaternary structure, homodimer. Interacts with FtsZ.

It localises to the cytoplasm. The protein localises to the nucleoid. Required for nucleoid occlusion (NO) phenomenon, which prevents Z-ring formation and cell division over the nucleoid. Acts as a DNA-associated cell division inhibitor that binds simultaneously chromosomal DNA and FtsZ, and disrupts the assembly of FtsZ polymers. SlmA-DNA-binding sequences (SBS) are dispersed on non-Ter regions of the chromosome, preventing FtsZ polymerization at these regions. This chain is Nucleoid occlusion factor SlmA, found in Salmonella typhi.